The sequence spans 765 residues: Phosphoribosylformylglycinamidine synthase subunit PurL (765 aa).

Positions 1–13 (MTVSPTSAPTQAI) are enriched in polar residues. A disordered region spans residues 1-32 (MTVSPTSAPTQAIDTVERAATTPDEPQPFGEL). His-65 is an active-site residue. Positions 68 and 112 each coordinate ATP. Glu-114 is a Mg(2+) binding site. Substrate contacts are provided by residues 115-118 (SHNH) and Arg-137. Catalysis depends on His-116, which acts as the Proton acceptor. Asp-138 is a Mg(2+) binding site. Residue Gln-263 participates in substrate binding. Asp-291 contributes to the Mg(2+) binding site. 335-337 (ESQ) is a substrate binding site. ATP contacts are provided by Asn-523 and Gly-560. Asn-561 contributes to the Mg(2+) binding site. Position 563 (Ser-563) interacts with substrate.

This sequence belongs to the FGAMS family. As to quaternary structure, monomer. Part of the FGAM synthase complex composed of 1 PurL, 1 PurQ and 2 PurS subunits.

Its subcellular location is the cytoplasm. The enzyme catalyses N(2)-formyl-N(1)-(5-phospho-beta-D-ribosyl)glycinamide + L-glutamine + ATP + H2O = 2-formamido-N(1)-(5-O-phospho-beta-D-ribosyl)acetamidine + L-glutamate + ADP + phosphate + H(+). Its pathway is purine metabolism; IMP biosynthesis via de novo pathway; 5-amino-1-(5-phospho-D-ribosyl)imidazole from N(2)-formyl-N(1)-(5-phospho-D-ribosyl)glycinamide: step 1/2. Part of the phosphoribosylformylglycinamidine synthase complex involved in the purines biosynthetic pathway. Catalyzes the ATP-dependent conversion of formylglycinamide ribonucleotide (FGAR) and glutamine to yield formylglycinamidine ribonucleotide (FGAM) and glutamate. The FGAM synthase complex is composed of three subunits. PurQ produces an ammonia molecule by converting glutamine to glutamate. PurL transfers the ammonia molecule to FGAR to form FGAM in an ATP-dependent manner. PurS interacts with PurQ and PurL and is thought to assist in the transfer of the ammonia molecule from PurQ to PurL. The sequence is that of Phosphoribosylformylglycinamidine synthase subunit PurL from Mycolicibacterium paratuberculosis (strain ATCC BAA-968 / K-10) (Mycobacterium paratuberculosis).